Consider the following 153-residue polypeptide: Membrane protein FAM174B (153 aa).

The signal sequence occupies residues 1–27; the sequence is MSALPPQPPPPLLLLLLALLAAPAALA. Over 28–84 the chain is Extracellular; that stretch reads RRAESASASQPEAEHQPPPGPGNATQLGSGMAGGGSSNSSVDAVVTRISSLLRDLPT. Residues 31–67 form a disordered region; the sequence is ESASASQPEAEHQPPPGPGNATQLGSGMAGGGSSNSS. Asparagine 50 carries an N-linked (GlcNAc...) asparagine glycan. Residues 85-105 form a helical membrane-spanning segment; that stretch reads LKATVIVACAFSALLIACLLL. Topologically, residues 106–153 are cytoplasmic; it reads RVFRLGKRLKKTRKYDIITTPAERVEMAPLNEEDDEDEDSTVFDIKYR.

Belongs to the FAM174 family.

The protein localises to the cell membrane. It is found in the golgi apparatus. Essential for Golgi structural integrity. The polypeptide is Membrane protein FAM174B (Fam174b) (Mus musculus (Mouse)).